The chain runs to 502 residues: MSEQEVKELDLNGEMLVRREKLAALRAKGNAFPNKFRRDALAQDLHNQYDSEDGEILKEKSIEVQVAGRIMTRRAMGKATFITIQDMSSKIQLYVARDNLPEGVYKDDVGTWDLGDIVGVKGTLFKTKTDELTVKTTEVQLLTKALRPLPDKFHGLTDQEVRYRQRYLDLISNEESRRTFIIRSKVVAGIREYFISKGFMEVETPMLQVIPGGASARPFVTHHNALDVDMYLRIAPELYLKRLVVGGFERVFELNRNFRNEGVSVRHNPEFTMLEYYQAYADYHDLMDNTEELLRKLAIDILGTTIVKYGEYEFDFGKPFERITLHDATVKYGADKGIVKEDLYDFDRAKATAERLGIEVQKSWGLGSIVNAIFEEVAEHHLIQPTFLMAHPAEISPLARRNDENPDVTDRFELFIGGREIGNGFSELNDAEDQNERFDAQVAAKEAGDDEAMFKDEDFVVALEHGLPPTAGEGLGIDRLAMLYANAPSIRDVILFPAMRQK.

Mg(2+) is bound by residues E413 and E420.

Belongs to the class-II aminoacyl-tRNA synthetase family. In terms of assembly, homodimer. Mg(2+) serves as cofactor.

It is found in the cytoplasm. The enzyme catalyses tRNA(Lys) + L-lysine + ATP = L-lysyl-tRNA(Lys) + AMP + diphosphate. The protein is Lysine--tRNA ligase of Haemophilus influenzae (strain 86-028NP).